A 254-amino-acid chain; its full sequence is 21S rRNA pseudouridine(2819) synthase (254 aa).

Aspartate 71 is a catalytic residue.

This sequence belongs to the pseudouridine synthase RluA family.

It localises to the mitochondrion. The enzyme catalyses uridine(2819) in 21S rRNA = pseudouridine(2819) in 21S rRNA. Its function is as follows. Pseudouridylate synthase responsible for the pseudouridine-2819 formation in mitochondrial 21S rRNA. May modulate the efficiency or the fidelity of the mitochondrial translation machinery. The protein is 21S rRNA pseudouridine(2819) synthase (PUS5) of Saccharomyces cerevisiae (strain ATCC 204508 / S288c) (Baker's yeast).